Here is a 188-residue protein sequence, read N- to C-terminus: Putative manganese efflux pump MntP (188 aa).

Transmembrane regions (helical) follow at residues 3 to 23 (FYAL…VALA), 35 to 55 (IAAT…AGWV), 63 to 83 (FISE…GLKM), 107 to 127 (VLTA…LAFM), 131 to 151 (IAFA…VGLA), and 167 to 187 (AGGL…LGLI).

The protein belongs to the MntP (TC 9.B.29) family.

It is found in the cell inner membrane. Probably functions as a manganese efflux pump. The chain is Putative manganese efflux pump MntP from Neisseria meningitidis serogroup A / serotype 4A (strain DSM 15465 / Z2491).